The chain runs to 383 residues: Putative dehydratase subunit YjiM (383 aa).

This sequence belongs to the FldB/FldC dehydratase alpha/beta subunit family.

In Escherichia coli (strain K12), this protein is Putative dehydratase subunit YjiM (yjiM).